We begin with the raw amino-acid sequence, 472 residues long: Cysteine--tRNA ligase (472 aa).

A Zn(2+)-binding site is contributed by Cys-27. Positions 29–39 (PTVYNLIHIGN) match the 'HIGH' region motif. Zn(2+) contacts are provided by Cys-214, His-239, and Glu-243. The 'KMSKS' region motif lies at 271–275 (KMSKS). Residue Lys-274 coordinates ATP.

It belongs to the class-I aminoacyl-tRNA synthetase family. Monomer. It depends on Zn(2+) as a cofactor.

The protein localises to the cytoplasm. The catalysed reaction is tRNA(Cys) + L-cysteine + ATP = L-cysteinyl-tRNA(Cys) + AMP + diphosphate. The chain is Cysteine--tRNA ligase from Lachnospira eligens (strain ATCC 27750 / DSM 3376 / VPI C15-48 / C15-B4) (Eubacterium eligens).